Reading from the N-terminus, the 374-residue chain is MSNVTVSAFTVDKSISEEHVLPSSFIPGSGNIFPKFTSAIPKTAWELWYFDGISKDDKSSIVIGVTRNAEGLKHGGFKVQVFVIWADERTWHRDLFFPESVVSINESGVTDGIWKDATSNSSISFSCAGDLSKASLVFDVPGVVQGDMHLEALPGDTGLDTDARLGPSVYYVRPIGRASVKAQLSLYSSDATAAEQFSLGTSANGGMDRVWSPLSWPQVMTESYYLRTQVGPYAMQIMRIFPPAGSEDQPSTMARLYREGQLVCVAQHVVTREDALMTHDSLILSKQDNSDSEDVVTGGYRDKNTGYTVEFVEKGNEGQRWKFQVRHERIIWNTPTSRPGPDATGNTGFVEVLCGGTIGESYEGVGTGGQCELS.

The segment at 1 to 216 is beta-sandwich motif; the sequence is MSNVTVSAFT…MDRVWSPLSW (216 aa). A beta-barrel motif region spans residues 216-374; that stretch reads WPQVMTESYY…VGTGGQCELS (159 aa).

Belongs to the Diels-Alderase family.

It catalyses the reaction (5S)-3-[(2E,6R,8E,10E,12E)-2,6-dimethyltetradeca-2,8,10,12-tetraenoyl]-5-(hydroxymethyl)pyrrolidine-2,4-dione = trichosetin. It functions in the pathway mycotoxin biosynthesis. Diels-Alderase; part of the gene cluster that mediates the biosynthesis of the HIV-1 integrase inhibitor equisetin and of fusarisetin A, both trans-fused decalin-containing tetramic acids showing also antimicrobial activity. The PKS module of fsa1 together with the enoylreductase fsa3 catalyze the formation of the polyketide unit which is then conjugated to L-serine by the condensation domain of the fsa1 NRPS module. Activity of the Dieckmann cyclase domain (RED) results in release of the Dieckmann product intermediate. Diels-Alderase fsa2 is involved in endo-selective Diels-Alder cycloaddition to form the decalin ring, leading to the production of N-desmethylequisetin also called trichosetin. Subsequent N-methylation is carried out by fsa4 to give equisetin. The enzymatic gene responsible for the conversion of equisetin to fusarisetin A has not been identified yet and is probably located outside of the fsa cluster. The polypeptide is Diels-Alderase fsa2 (Fusarium sp. (strain FN080326)).